The sequence spans 91 residues: Mercuric transport protein periplasmic component (91 aa).

Residues 1-19 (MKKLFASLALAAVVAPVWA) form the signal peptide. In terms of domain architecture, HMA spans 22 to 88 (QTVTLSVPGM…ATADAGYPSS (67 aa)). C33 and C36 together coordinate Hg(2+).

The protein belongs to the MerP family. As to quaternary structure, monomer.

It localises to the periplasm. Functionally, involved in mercury resistance. Acts as a mercury scavenger that specifically binds to a mercuric ion in the periplasm and probably passes it to the cytoplasmic mercuric reductase MerA via the mercuric transport protein MerT. The chain is Mercuric transport protein periplasmic component from Pseudomonas aeruginosa.